A 342-amino-acid chain; its full sequence is Holliday junction branch migration complex subunit RuvB (342 aa).

A large ATPase domain (RuvB-L) region spans residues 1–185 (MREDYLKSDD…FGINARLEYY (185 aa)). ATP is bound by residues leucine 24, arginine 25, glycine 66, lysine 69, threonine 70, threonine 71, 132–134 (EDY), arginine 175, tyrosine 185, and arginine 222. Threonine 70 serves as a coordination point for Mg(2+). Residues 186-256 (DAKLLTRIVQ…IARIALQALN (71 aa)) form a small ATPAse domain (RuvB-S) region. A head domain (RuvB-H) region spans residues 259–342 (HNGLDDMDNR…PPAQSGTLFE (84 aa)). 2 residues coordinate DNA: arginine 314 and arginine 319.

It belongs to the RuvB family. Homohexamer. Forms an RuvA(8)-RuvB(12)-Holliday junction (HJ) complex. HJ DNA is sandwiched between 2 RuvA tetramers; dsDNA enters through RuvA and exits via RuvB. An RuvB hexamer assembles on each DNA strand where it exits the tetramer. Each RuvB hexamer is contacted by two RuvA subunits (via domain III) on 2 adjacent RuvB subunits; this complex drives branch migration. In the full resolvosome a probable DNA-RuvA(4)-RuvB(12)-RuvC(2) complex forms which resolves the HJ.

Its subcellular location is the cytoplasm. The catalysed reaction is ATP + H2O = ADP + phosphate + H(+). The RuvA-RuvB-RuvC complex processes Holliday junction (HJ) DNA during genetic recombination and DNA repair, while the RuvA-RuvB complex plays an important role in the rescue of blocked DNA replication forks via replication fork reversal (RFR). RuvA specifically binds to HJ cruciform DNA, conferring on it an open structure. The RuvB hexamer acts as an ATP-dependent pump, pulling dsDNA into and through the RuvAB complex. RuvB forms 2 homohexamers on either side of HJ DNA bound by 1 or 2 RuvA tetramers; 4 subunits per hexamer contact DNA at a time. Coordinated motions by a converter formed by DNA-disengaged RuvB subunits stimulates ATP hydrolysis and nucleotide exchange. Immobilization of the converter enables RuvB to convert the ATP-contained energy into a lever motion, pulling 2 nucleotides of DNA out of the RuvA tetramer per ATP hydrolyzed, thus driving DNA branch migration. The RuvB motors rotate together with the DNA substrate, which together with the progressing nucleotide cycle form the mechanistic basis for DNA recombination by continuous HJ branch migration. Branch migration allows RuvC to scan DNA until it finds its consensus sequence, where it cleaves and resolves cruciform DNA. The protein is Holliday junction branch migration complex subunit RuvB of Cytophaga hutchinsonii (strain ATCC 33406 / DSM 1761 / CIP 103989 / NBRC 15051 / NCIMB 9469 / D465).